Consider the following 429-residue polypeptide: Enolase (429 aa).

Residue Q163 participates in (2R)-2-phosphoglycerate binding. E205 serves as the catalytic Proton donor. D242, E287, and D314 together coordinate Mg(2+). Residues K339, R368, S369, and K390 each contribute to the (2R)-2-phosphoglycerate site. Residue K339 is the Proton acceptor of the active site.

It belongs to the enolase family. Requires Mg(2+) as cofactor.

It is found in the cytoplasm. Its subcellular location is the secreted. The protein resides in the cell surface. The catalysed reaction is (2R)-2-phosphoglycerate = phosphoenolpyruvate + H2O. Its pathway is carbohydrate degradation; glycolysis; pyruvate from D-glyceraldehyde 3-phosphate: step 4/5. Catalyzes the reversible conversion of 2-phosphoglycerate (2-PG) into phosphoenolpyruvate (PEP). It is essential for the degradation of carbohydrates via glycolysis. The chain is Enolase from Magnetococcus marinus (strain ATCC BAA-1437 / JCM 17883 / MC-1).